A 789-amino-acid chain; its full sequence is Ent-kaur-16-ene synthase, chloroplastic (789 aa).

Mg(2+) is bound by residues Asp536, Asp540, Asn680, Ser684, and Glu688. A DDXXD motif motif is present at residues 536 to 540; that stretch reads DDFYD.

This sequence belongs to the terpene synthase family. Mg(2+) is required as a cofactor. The N-terminus is blocked. Abundant in most tissues. Present in low amounts in mature cotyledons.

The protein resides in the plastid. It localises to the chloroplast. It catalyses the reaction ent-copalyl diphosphate = ent-kaur-16-ene + diphosphate. It participates in plant hormone biosynthesis; gibberellin biosynthesis. Catalyzes the conversion of ent-copalyl diphosphate to the gibberellin precursor ent-kaur-16-ene. The protein is Ent-kaur-16-ene synthase, chloroplastic of Cucurbita maxima (Pumpkin).